The following is a 388-amino-acid chain: Sex-determination protein fem-3 (388 aa).

6 repeat units span residues 7–10, 110–113, 141–144, 234–237, 284–287, and 371–374.

As to quaternary structure, component of a complex containing fem-1, fem-2 and fem-3. Interacts with fem-1 and fem-2 (via N-terminus). Part of a E3 ubiquitin-protein ligase complex, at least composed of cul-2, elc-1, tra-1, fem-1, fem-2 and fem-3; mediates the ubiquitination and subsequent proteasomal degradation of tra-1. Interacts with tra-1. Interacts with sel-10. Interacts with tra-2.

Functionally, required for male development. In XO (male) animals, fem-3 directs male differentiation in all tissues. In XX (hermaphrodite) animals, it specifies the first 80 or so germ cells to be sperm. Negatively regulates male development when bound to tra-2. Together with fem-2 associates with the CBC(fem-1) E3 ubiquitin-protein ligase complex which mediates the ubiquitination and subsequent proteasomal degradation of tra-1. In Caenorhabditis elegans, this protein is Sex-determination protein fem-3 (fem-3).